A 640-amino-acid polypeptide reads, in one-letter code: ATP-dependent rRNA helicase spb4 (640 aa).

The short motif at 14–42 is the Q motif element; it reads WDAVTPALSEWVLEAMSSMGFTRMTPVQA. The 205-residue stretch at 45 to 249 folds into the Helicase ATP-binding domain; it reads IPLFMAHKDV…RVGLRNPVKV (205 aa). ATP is bound at residue 58-65; sequence AVTGSGKT. Positions 197–200 match the DEAD box motif; sequence DEAD. One can recognise a Helicase C-terminal domain in the interval 283–437; it reads ALKRIVSSVQ…SISFSDADAA (155 aa). A coiled-coil region spans residues 521-629; it reads AYKDKQREKR…VAKAAGAKAD (109 aa). Disordered stretches follow at residues 531–593 and 607–640; these read RKEL…EEEK and RKKN…QGFD. A compositionally biased stretch (basic and acidic residues) spans 577 to 593; it reads KSKQEKARWEKMTEEEK. A compositionally biased stretch (acidic residues) spans 630-640; sequence GDDEEEFQGFD.

Belongs to the DEAD box helicase family. DDX55/SPB4 subfamily. As to quaternary structure, component of pre-60S ribosomal complexes.

It is found in the nucleus. The protein resides in the nucleolus. It carries out the reaction ATP + H2O = ADP + phosphate + H(+). Functionally, ATP-binding RNA helicase involved in the biogenesis of 60S ribosomal subunits. Binds 90S pre-ribosomal particles and dissociates from pre-60S ribosomal particles after processing of 27SB pre-rRNA. Required for the normal formation of 18S rRNA through the processing of pre-rRNAs at sites A0, A1 and A2, and the normal formation of 25S and 5.8S rRNAs through the processing of pre-rRNAs at sites C1 and C2. The sequence is that of ATP-dependent rRNA helicase spb4 from Aspergillus fumigatus (strain ATCC MYA-4609 / CBS 101355 / FGSC A1100 / Af293) (Neosartorya fumigata).